The sequence spans 885 residues: Alanine--tRNA ligase (885 aa).

The Zn(2+) site is built by His571, His575, Cys674, and His678.

This sequence belongs to the class-II aminoacyl-tRNA synthetase family. The cofactor is Zn(2+).

The protein localises to the cytoplasm. The enzyme catalyses tRNA(Ala) + L-alanine + ATP = L-alanyl-tRNA(Ala) + AMP + diphosphate. In terms of biological role, catalyzes the attachment of alanine to tRNA(Ala) in a two-step reaction: alanine is first activated by ATP to form Ala-AMP and then transferred to the acceptor end of tRNA(Ala). Also edits incorrectly charged Ser-tRNA(Ala) and Gly-tRNA(Ala) via its editing domain. This chain is Alanine--tRNA ligase, found in Clavibacter sepedonicus (Clavibacter michiganensis subsp. sepedonicus).